The following is a 169-amino-acid chain: E1B protein, small T-antigen (169 aa).

The protein belongs to the adenoviridae E1B 19 kDa protein family.

The sequence is that of E1B protein, small T-antigen from Canine adenovirus serotype 1 (strain CLL) (CAdV-1).